The sequence spans 123 residues: uncharacterized protein (123 aa).

This is an uncharacterized protein from Schizosaccharomyces pombe (strain 972 / ATCC 24843) (Fission yeast).